The sequence spans 293 residues: Homeobox protein ceh-24 (293 aa).

Basic and acidic residues-rich tracts occupy residues Met-1–Glu-15 and Gln-22–Lys-38. Disordered regions lie at residues Met-1–Lys-38 and Glu-203–Val-256. A DNA-binding region (homeobox) is located at residues Arg-144–Glu-203.

It belongs to the NK-2 homeobox family. Expressed in the 8 vulval muscles, 8-10 ventral neurons in the head and in the most posterior pharyngeal muscle cell, m8.

It localises to the nucleus. Probable transcriptional regulator that is required in neural development for the normal formation of sublateral cholinergic motor neuron processes. Plays a role in regulating the expression of acetylcholine transporter protein unc-17 in the sublateral processes. In particular, it is required in sublateral motor neurons for a left-right turning behavior that occurs during the lethargus phase of the normal sleep process called 'flipping'. During 'flipping' animals rotate 180 degrees about their longitudinal axis. This chain is Homeobox protein ceh-24, found in Caenorhabditis briggsae.